The sequence spans 317 residues: RHOMBOID-like protein 2 (317 aa).

A run of 7 helical transmembrane segments spans residues 33-53 (SWLIPAIVVANLAVFIAVMFV), 118-138 (WLHAGIIHLLTNMLSLIFIGI), 149-169 (VGLIYLISGLGGSILSSLFLQ), 172-192 (ISVGASGALFGLLGAMLSELL), 202-222 (AAALITLLFIIAINLALGMLP), 224-244 (VDNFAHIGGFLTGFCLGFVLL), and 272-292 (LFVVSVVLLVVGLTVALVMLF). Serine 177 serves as the catalytic Nucleophile. Residue histidine 229 is the Charge relay system of the active site.

It belongs to the peptidase S54 family. Expressed in roots, seedlings, leaves, stems and flowers.

Its subcellular location is the golgi apparatus membrane. The catalysed reaction is Cleaves type-1 transmembrane domains using a catalytic dyad composed of serine and histidine that are contributed by different transmembrane domains.. Rhomboid-type serine protease that catalyzes intramembrane proteolysis. Can cleave the Drosophila proteins Spitz and Keren. May function in pollen elongation. The polypeptide is RHOMBOID-like protein 2 (Arabidopsis thaliana (Mouse-ear cress)).